A 200-amino-acid chain; its full sequence is Probable molybdenum cofactor guanylyltransferase (200 aa).

GTP-binding positions include 9–11 (LAG), lysine 21, aspartate 69, and aspartate 100. A Mg(2+)-binding site is contributed by aspartate 100.

The protein belongs to the MobA family. It depends on Mg(2+) as a cofactor.

The protein localises to the cytoplasm. It catalyses the reaction Mo-molybdopterin + GTP + H(+) = Mo-molybdopterin guanine dinucleotide + diphosphate. In terms of biological role, transfers a GMP moiety from GTP to Mo-molybdopterin (Mo-MPT) cofactor (Moco or molybdenum cofactor) to form Mo-molybdopterin guanine dinucleotide (Mo-MGD) cofactor. This is Probable molybdenum cofactor guanylyltransferase from Bacillus thuringiensis (strain Al Hakam).